The following is a 245-amino-acid chain: tRNA1(Val) (adenine(37)-N6)-methyltransferase (245 aa).

This sequence belongs to the methyltransferase superfamily. tRNA (adenine-N(6)-)-methyltransferase family.

It is found in the cytoplasm. The enzyme catalyses adenosine(37) in tRNA1(Val) + S-adenosyl-L-methionine = N(6)-methyladenosine(37) in tRNA1(Val) + S-adenosyl-L-homocysteine + H(+). Specifically methylates the adenine in position 37 of tRNA(1)(Val) (anticodon cmo5UAC). The protein is tRNA1(Val) (adenine(37)-N6)-methyltransferase of Escherichia coli (strain UTI89 / UPEC).